Reading from the N-terminus, the 214-residue chain is LOB domain-containing protein 7 (214 aa).

The 102-residue stretch at 12 to 113 (TACAACKHQR…TELNLTRQQI (102 aa)) folds into the LOB domain.

The protein belongs to the LOB domain-containing protein family.

This is LOB domain-containing protein 7 (LBD7) from Arabidopsis thaliana (Mouse-ear cress).